A 338-amino-acid chain; its full sequence is S-adenosylmethionine:tRNA ribosyltransferase-isomerase (338 aa).

Belongs to the QueA family. Monomer.

Its subcellular location is the cytoplasm. It catalyses the reaction 7-aminomethyl-7-carbaguanosine(34) in tRNA + S-adenosyl-L-methionine = epoxyqueuosine(34) in tRNA + adenine + L-methionine + 2 H(+). It functions in the pathway tRNA modification; tRNA-queuosine biosynthesis. Transfers and isomerizes the ribose moiety from AdoMet to the 7-aminomethyl group of 7-deazaguanine (preQ1-tRNA) to give epoxyqueuosine (oQ-tRNA). The protein is S-adenosylmethionine:tRNA ribosyltransferase-isomerase of Francisella philomiragia subsp. philomiragia (strain ATCC 25017 / CCUG 19701 / FSC 153 / O#319-036).